Here is a 326-residue protein sequence, read N- to C-terminus: Tetraacyldisaccharide 4'-kinase (326 aa).

ATP is bound at residue 55-62 (TAGGNGKT).

Belongs to the LpxK family.

The enzyme catalyses a lipid A disaccharide + ATP = a lipid IVA + ADP + H(+). It functions in the pathway glycolipid biosynthesis; lipid IV(A) biosynthesis; lipid IV(A) from (3R)-3-hydroxytetradecanoyl-[acyl-carrier-protein] and UDP-N-acetyl-alpha-D-glucosamine: step 6/6. Functionally, transfers the gamma-phosphate of ATP to the 4'-position of a tetraacyldisaccharide 1-phosphate intermediate (termed DS-1-P) to form tetraacyldisaccharide 1,4'-bis-phosphate (lipid IVA). This Serratia proteamaculans (strain 568) protein is Tetraacyldisaccharide 4'-kinase.